The chain runs to 132 residues: Small ribosomal subunit protein uS11 (132 aa).

Residues 110–132 (IEDVTPVPSDSTRRKGGRRGRRL) form a disordered region. Residues 123-132 (RKGGRRGRRL) are compositionally biased toward basic residues.

This sequence belongs to the universal ribosomal protein uS11 family. In terms of assembly, component of the small ribosomal subunit. Mature ribosomes consist of a small (40S) and a large (60S) subunit. The 40S subunit contains about 32 different proteins and 1 molecule of RNA (18S). The 60S subunit contains 45 different proteins and 3 molecules of RNA (25S, 5.8S and 5S).

Its subcellular location is the cytoplasm. In terms of biological role, component of the ribosome, a large ribonucleoprotein complex responsible for the synthesis of proteins in the cell. The small ribosomal subunit (SSU) binds messenger RNAs (mRNAs) and translates the encoded message by selecting cognate aminoacyl-transfer RNA (tRNA) molecules. The large subunit (LSU) contains the ribosomal catalytic site termed the peptidyl transferase center (PTC), which catalyzes the formation of peptide bonds, thereby polymerizing the amino acids delivered by tRNAs into a polypeptide chain. The nascent polypeptides leave the ribosome through a tunnel in the LSU and interact with protein factors that function in enzymatic processing, targeting, and the membrane insertion of nascent chains at the exit of the ribosomal tunnel. RPS14B is involved in nucleolar processing of pre-18S ribosomal RNA and ribosome assembly. This chain is Small ribosomal subunit protein uS11 (RPS14B), found in Candida albicans (strain SC5314 / ATCC MYA-2876) (Yeast).